The sequence spans 190 residues: Endo-1,4-beta-xylanase (190 aa).

The 190-residue stretch at 1–190 folds into the GH11 domain; the sequence is QTIGPGTGYS…SSGSASITVS (190 aa). Glutamate 86 (nucleophile) is an active-site residue. Glutamate 177 (proton donor) is an active-site residue.

The protein belongs to the glycosyl hydrolase 11 (cellulase G) family.

The catalysed reaction is Endohydrolysis of (1-&gt;4)-beta-D-xylosidic linkages in xylans.. It functions in the pathway glycan degradation; xylan degradation. The chain is Endo-1,4-beta-xylanase from Trichoderma harzianum (Hypocrea lixii).